We begin with the raw amino-acid sequence, 603 residues long: MAKHIVELTDALSNKIAAGEVVERPASVVKELVENAIDAGSTVIDILVEEAGLNKITIIDNGSGIEEEDVATAFLRHATSKIKNEADLFRVHTLGFRGEALPSIASVSHLSMETSTGETKGTTISLEGGKIMEQKSGHARKGTQIEVSQLFFNTPARLKYLKSLPTELGNITDILNRLALAHPDISFRFSHNGKPLLQTNGNGDLRQVIAAIYGVSIARKSIPVKAESLDFNISGYAVLPEVNRSNRNYISTIINGRFIKNFALVKAIQEGYHTLLPIGRFPIIVLQIEMDPIIVDVNVHPAKLEVRLSKEKELGQLISQMIKEAFHQLQLIPDGEVSKKQKEQQKSEQIQMSFEENKLPKETPTLFSKPNVPEYVPSDEDTSREDDFILETLPTYDSKIQPEQAEEPKERIPKMYPIGQMHATYIFAQNENGLYIIDQHAAQERIKYEFYREKIGEVSRELQELLVPIVLEFPTDEYVRLEEQKTKLEEVGVFLENFGQNSFIIRAHPTWFPKNQEEEMLREIIDEALSAPSISIHKLREDTAIMMSCKKSIKANHYLTMQDMEALLDTLREASDPFTCPHGRPVIIQYSTYELEKMFKRVM.

Positions 336-346 (EVSKKQKEQQK) are enriched in basic and acidic residues. Disordered stretches follow at residues 336-355 (EVSK…MSFE) and 361-384 (KETP…DTSR).

This sequence belongs to the DNA mismatch repair MutL/HexB family.

In terms of biological role, this protein is involved in the repair of mismatches in DNA. It is required for dam-dependent methyl-directed DNA mismatch repair. May act as a 'molecular matchmaker', a protein that promotes the formation of a stable complex between two or more DNA-binding proteins in an ATP-dependent manner without itself being part of a final effector complex. The chain is DNA mismatch repair protein MutL from Listeria welshimeri serovar 6b (strain ATCC 35897 / DSM 20650 / CCUG 15529 / CIP 8149 / NCTC 11857 / SLCC 5334 / V8).